We begin with the raw amino-acid sequence, 249 residues long: Isoprenyl transferase (249 aa).

D25 is a catalytic residue. D25 contacts Mg(2+). Substrate contacts are provided by residues 26 to 29 (GNGR), W30, R38, H42, and 70 to 72 (STE). Catalysis depends on N73, which acts as the Proton acceptor. Residues W74, R76, R197, and 203-205 (RLS) each bind substrate. E216 contacts Mg(2+).

Belongs to the UPP synthase family. As to quaternary structure, homodimer. It depends on Mg(2+) as a cofactor.

In terms of biological role, catalyzes the condensation of isopentenyl diphosphate (IPP) with allylic pyrophosphates generating different type of terpenoids. In Streptococcus mutans serotype c (strain ATCC 700610 / UA159), this protein is Isoprenyl transferase.